We begin with the raw amino-acid sequence, 287 residues long: MAGAKEIRSKIASVQNTQKITKAMEMVAASKMRKSQDRMAASRPYAETMRKVIGHLANGNLEYKHPYLEERDVKRVGYLVVSTDRGLCGGLNINLFKKLLADMKAWSDKGVQCELAMIGSKGVSFFNSVGGNVVSQVTGMGDNPSLSELIGPVKVMLQAYDEGRLDKLYIVSNKFINTMSQVPTITQLLPLPASEDDDLKRKAWDYLYEPDPKALLDTLLRRYVESQVYQGVVENLASEQAARMVAMKAATDNGGSLIKELQLVYNKARQASITQELTEIVSGAAAV.

Belongs to the ATPase gamma chain family. F-type ATPases have 2 components, CF(1) - the catalytic core - and CF(0) - the membrane proton channel. CF(1) has five subunits: alpha(3), beta(3), gamma(1), delta(1), epsilon(1). CF(0) has three main subunits: a, b and c.

It is found in the cell inner membrane. Its function is as follows. Produces ATP from ADP in the presence of a proton gradient across the membrane. The gamma chain is believed to be important in regulating ATPase activity and the flow of protons through the CF(0) complex. This is ATP synthase gamma chain from Salmonella gallinarum (strain 287/91 / NCTC 13346).